Here is a 428-residue protein sequence, read N- to C-terminus: AP-1 complex subunit mu-2 (428 aa).

The region spanning 170–426 (KNEVFLDVIE…ITMAGEYELR (257 aa)) is the MHD domain.

It belongs to the adaptor complexes medium subunit family. Adaptor protein complex 1 (AP-1) is a heterotetramer composed of two large adaptins (gamma-type subunit and beta-type subunit), a medium adaptin (mu-type subunit) and a small adaptin (sigma-type subunit). As to expression, ubiquitous.

The protein localises to the golgi apparatus. The protein resides in the trans-Golgi network membrane. Its subcellular location is the early endosome membrane. It localises to the cytoplasmic vesicle. It is found in the clathrin-coated vesicle membrane. In terms of biological role, subunit of clathrin-associated adaptor protein complex 1 that plays a role in protein sorting at the trans-Golgi network and early endosomes (TGN/EE). The AP complexes mediate the recruitment of clathrin to membranes and the recognition of sorting signals within the cytosolic tails of transmembrane cargo molecules. Required for KNOLLE localization at the cell plate to mediate cytokinesis. Functions redundantly with AP1M1 in multiple post-Golgi trafficking pathways leading from the TGN to the vacuole, the plasma membrane, and the cell-division plane. This chain is AP-1 complex subunit mu-2 (AP1M2), found in Arabidopsis thaliana (Mouse-ear cress).